Reading from the N-terminus, the 259-residue chain is Tonin (259 aa).

The N-terminal stretch at 1–18 is a signal peptide; the sequence is MWLQILSLVLSVGRIDAA. Residues 19 to 24 constitute a propeptide, activation peptide; the sequence is PPGQSR. The Peptidase S1 domain occupies 25–256; that stretch reads IVGGYKCEKN…FTSWIKKVMK (232 aa). 5 disulfides stabilise this stretch: Cys-31–Cys-171, Cys-48–Cys-64, Cys-150–Cys-217, Cys-182–Cys-196, and Cys-207–Cys-232. His-63 acts as the Charge relay system in catalysis. His-63 serves as a coordination point for Zn(2+). N-linked (GlcNAc...) asparagine glycosylation is present at Asn-106. Residues His-113 and His-115 each contribute to the Zn(2+) site. Asp-118 functions as the Charge relay system in the catalytic mechanism. Asn-189 carries N-linked (GlcNAc...) asparagine glycosylation. Ser-211 acts as the Charge relay system in catalysis.

It belongs to the peptidase S1 family. Kallikrein subfamily. As to quaternary structure, monomer. The cofactor is Zn(2+). As to expression, found in submaxillary gland.

It catalyses the reaction Preferential cleavage of Arg-|-Xaa bonds in small molecule substrates. Highly selective action to release kallidin (lysyl-bradykinin) from kininogen involves hydrolysis of Met-|-Xaa or Leu-|-Xaa.. Functionally, this protein has both trypsin- and chymotrypsin-like activities, being able to release angiotensin II from angiotensin I or angiotensinogen. This chain is Tonin (Klk2), found in Rattus norvegicus (Rat).